The primary structure comprises 477 residues: Bifunctional protein HldE (477 aa).

Residues 1 to 318 (MKVTLPEFER…ENAVRGRAET (318 aa)) are ribokinase. Lys179 is subject to N6-acetyllysine. 195–198 (NLSE) is a binding site for ATP. The active site involves Asp264. The tract at residues 344 to 477 (MTNGVFDILH…IKKIQQDKKG (134 aa)) is cytidylyltransferase.

The protein in the N-terminal section; belongs to the carbohydrate kinase PfkB family. This sequence in the C-terminal section; belongs to the cytidylyltransferase family. In terms of assembly, homodimer.

The enzyme catalyses D-glycero-beta-D-manno-heptose 7-phosphate + ATP = D-glycero-beta-D-manno-heptose 1,7-bisphosphate + ADP + H(+). The catalysed reaction is D-glycero-beta-D-manno-heptose 1-phosphate + ATP + H(+) = ADP-D-glycero-beta-D-manno-heptose + diphosphate. It functions in the pathway nucleotide-sugar biosynthesis; ADP-L-glycero-beta-D-manno-heptose biosynthesis; ADP-L-glycero-beta-D-manno-heptose from D-glycero-beta-D-manno-heptose 7-phosphate: step 1/4. It participates in nucleotide-sugar biosynthesis; ADP-L-glycero-beta-D-manno-heptose biosynthesis; ADP-L-glycero-beta-D-manno-heptose from D-glycero-beta-D-manno-heptose 7-phosphate: step 3/4. Catalyzes the phosphorylation of D-glycero-D-manno-heptose 7-phosphate at the C-1 position to selectively form D-glycero-beta-D-manno-heptose-1,7-bisphosphate. Its function is as follows. Catalyzes the ADP transfer from ATP to D-glycero-beta-D-manno-heptose 1-phosphate, yielding ADP-D-glycero-beta-D-manno-heptose. This Shigella dysenteriae serotype 1 (strain Sd197) protein is Bifunctional protein HldE.